A 647-amino-acid polypeptide reads, in one-letter code: Threonine--tRNA ligase (647 aa).

Residues 1 to 61 (MIKITFPDGA…EEDGSIEIVT (61 aa)) enclose the TGS domain. Residues 240–538 (DHRKLGKELD…LIETYKGAFP (299 aa)) form a catalytic region. Zn(2+) is bound by residues Cys-334, His-385, and His-515.

This sequence belongs to the class-II aminoacyl-tRNA synthetase family. As to quaternary structure, homodimer. Zn(2+) is required as a cofactor.

It is found in the cytoplasm. It carries out the reaction tRNA(Thr) + L-threonine + ATP = L-threonyl-tRNA(Thr) + AMP + diphosphate + H(+). Functionally, catalyzes the attachment of threonine to tRNA(Thr) in a two-step reaction: L-threonine is first activated by ATP to form Thr-AMP and then transferred to the acceptor end of tRNA(Thr). Also edits incorrectly charged L-seryl-tRNA(Thr). In Streptococcus agalactiae serotype III (strain NEM316), this protein is Threonine--tRNA ligase.